A 144-amino-acid chain; its full sequence is Ethylene-responsive transcription factor ERF019 (144 aa).

The AP2/ERF DNA-binding region spans Lys13–Pro72.

This sequence belongs to the AP2/ERF transcription factor family. ERF subfamily.

It localises to the nucleus. Functionally, probably acts as a transcriptional activator. Binds to the GCC-box pathogenesis-related promoter element. May be involved in the regulation of gene expression by stress factors and by components of stress signal transduction pathways. This chain is Ethylene-responsive transcription factor ERF019 (ERF019), found in Arabidopsis thaliana (Mouse-ear cress).